Consider the following 342-residue polypeptide: N-acetyl-gamma-glutamyl-phosphate reductase (342 aa).

Cysteine 156 is a catalytic residue.

It belongs to the NAGSA dehydrogenase family. Type 1 subfamily.

The protein localises to the cytoplasm. The catalysed reaction is N-acetyl-L-glutamate 5-semialdehyde + phosphate + NADP(+) = N-acetyl-L-glutamyl 5-phosphate + NADPH + H(+). Its pathway is amino-acid biosynthesis; L-arginine biosynthesis; N(2)-acetyl-L-ornithine from L-glutamate: step 3/4. Functionally, catalyzes the NADPH-dependent reduction of N-acetyl-5-glutamyl phosphate to yield N-acetyl-L-glutamate 5-semialdehyde. This chain is N-acetyl-gamma-glutamyl-phosphate reductase, found in Pseudoalteromonas atlantica (strain T6c / ATCC BAA-1087).